The following is a 522-amino-acid chain: 2-isopropylmalate synthase (522 aa).

The 263-residue stretch at 5-267 (VIIFDTTLRD…ETGINAKEIH (263 aa)) folds into the Pyruvate carboxyltransferase domain. Mn(2+)-binding residues include Asp14, His202, His204, and Asn238. Residues 392 to 522 (QLQQLVVQSD…MHKNRELGGV (131 aa)) form a regulatory domain region.

The protein belongs to the alpha-IPM synthase/homocitrate synthase family. LeuA type 1 subfamily. Homodimer. Requires Mn(2+) as cofactor.

It localises to the cytoplasm. The enzyme catalyses 3-methyl-2-oxobutanoate + acetyl-CoA + H2O = (2S)-2-isopropylmalate + CoA + H(+). It participates in amino-acid biosynthesis; L-leucine biosynthesis; L-leucine from 3-methyl-2-oxobutanoate: step 1/4. Catalyzes the condensation of the acetyl group of acetyl-CoA with 3-methyl-2-oxobutanoate (2-ketoisovalerate) to form 3-carboxy-3-hydroxy-4-methylpentanoate (2-isopropylmalate). The sequence is that of 2-isopropylmalate synthase from Shewanella sp. (strain MR-4).